A 525-amino-acid chain; its full sequence is Polyamine aminopropyltransferase 1 (525 aa).

6 helical membrane-spanning segments follow: residues 21–41, 53–73, 89–109, 117–137, 155–175, and 180–200; these read ALLV…ELIA, ILQF…GSWV, LELL…LLFA, LVLY…IPLV, VLTF…LVLA, and LVRT…WTLW. In terms of domain architecture, PABS spans 220-464; the sequence is AGMVGAALLA…GEWGFILAAP (245 aa). Residues 222–471 are spermidine synthase; it reads MVGAALLAGF…AAPGRADFRP (250 aa). S-methyl-5'-thioadenosine is bound at residue Q259. Residues H289 and D313 each contribute to the spermidine site. Residues D333 and 367-368 each bind S-methyl-5'-thioadenosine; that span reads DA. Residue D385 is the Proton acceptor of the active site.

This sequence belongs to the spermidine/spermine synthase family. As to quaternary structure, homodimer or homotetramer.

It is found in the cell membrane. It carries out the reaction S-adenosyl 3-(methylsulfanyl)propylamine + putrescine = S-methyl-5'-thioadenosine + spermidine + H(+). The protein operates within amine and polyamine biosynthesis; spermidine biosynthesis; spermidine from putrescine: step 1/1. Its function is as follows. Catalyzes the irreversible transfer of a propylamine group from the amino donor S-adenosylmethioninamine (decarboxy-AdoMet) to putrescine (1,4-diaminobutane) to yield spermidine. The sequence is that of Polyamine aminopropyltransferase 1 from Ralstonia nicotianae (strain ATCC BAA-1114 / GMI1000) (Ralstonia solanacearum).